Consider the following 989-residue polypeptide: DNA-binding protein SMUBP-2 (989 aa).

An N-acetylalanine modification is found at Ala-2. ATP is bound by residues 213–220 (GPPGTGKT), Gln-402, Tyr-441, and Glu-570. The tract at residues 637 to 783 (TAFEYLDDIV…KARHITVSRK (147 aa)) is SS DNA-binding. Disordered stretches follow at residues 650 to 717 (YTHE…GCDR), 765 to 818 (LRHD…GQPH), and 833 to 869 (LQRQ…TKGP). A compositionally biased stretch (low complexity) spans 677-690 (EQENGQEARAAAGQ). The region spanning 721–784 (IDRTEHFRAM…ARHITVSRKS (64 aa)) is the R3H domain. Basic and acidic residues predominate over residues 765–775 (LRHDSTGEGKA). Phosphoserine occurs at positions 797 and 800. Over residues 833–842 (LQRQQGSQAQ) the composition is skewed to low complexity. The Nuclear localization signal signature appears at 860–864 (KKKKK). The segment at 885–934 (IKADNTCSFAKCTASTTTLGQFCMHCSRRYCLSHHLPEIHGCGEKARAHA) adopts an AN1-type zinc-finger fold. Residues Cys-891, Cys-896, Cys-907, Cys-910, Cys-915, His-918, His-924, and Cys-926 each coordinate Zn(2+). Over residues 954–972 (ALDPAKRAQLQRRLDKKLG) the composition is skewed to basic and acidic residues. Residues 954–989 (ALDPAKRAQLQRRLDKKLGELSSQRTSKRKEKERGT) are disordered.

Belongs to the DNA2/NAM7 helicase family. In terms of assembly, homooligomer. Interacts with RUVBL1. Interacts with RUVBL2. Interacts with GTF3C1. Interacts with ABT1. Interacts with ribosomes. High expression in brain and testis, moderate in heart, spleen, and kidney, and low in other tissues.

The protein localises to the nucleus. It localises to the cytoplasm. Its subcellular location is the cell projection. The protein resides in the axon. The catalysed reaction is ATP + H2O = ADP + phosphate + H(+). Its function is as follows. 5' to 3' helicase that unwinds RNA and DNA duplexes in an ATP-dependent reaction. Specific to 5'-phosphorylated single-stranded guanine-rich sequences. May play a role in RNA metabolism, ribosome biogenesis or initiation of translation. May play a role in regulation of transcription. Interacts with tRNA-Tyr. The sequence is that of DNA-binding protein SMUBP-2 (IGHMBP2) from Mesocricetus auratus (Golden hamster).